A 271-amino-acid chain; its full sequence is N-acetyltransferase ECO1 (271 aa).

A disordered region spans residues 1 to 38 (MKTYRAKRKYLSESEDDVFSSSPTQSPETSPLQPPNES). The segment covering 20–31 (SSSPTQSPETSP) has biased composition (low complexity). A CCHH-type zinc finger spans residues 80-104 (TTCKTCGMTYQVAYGPDISAHKSFH).

It belongs to the acetyltransferase family. ECO subfamily.

The protein resides in the nucleus. In terms of biological role, probable acetyltransferase required for the establishment of sister chromatid cohesion and couple the processes of cohesion and DNA replication to ensure that only sister chromatids become paired together. In contrast to the structural cohesins, the deposition and establishment factors are required only during S phase. Acts by acetylating the cohesin complex component SMC3. In Yarrowia lipolytica (strain CLIB 122 / E 150) (Yeast), this protein is N-acetyltransferase ECO1 (ECO1).